The following is a 386-amino-acid chain: RNA polymerase sigma factor SigA (386 aa).

The sigma-70 factor domain-2 stretch occupies residues 154–224; that stretch reads LAEANLRLVV…TRAIADQART (71 aa). The Interaction with polymerase core subunit RpoC motif lies at 178-181; sequence DLIQ. Residues 233-309 are sigma-70 factor domain-3; it reads ETINKLIRVQ…DDVIESPVDY (77 aa). Positions 322–375 are sigma-70 factor domain-4; it reads VMDTLTDREENVLRMRFGLDDGRMHTLEDVGKQFKVTRERIRQIEAKAIKKLRH. A DNA-binding region (H-T-H motif) is located at residues 348–367; sequence LEDVGKQFKVTRERIRQIEA.

This sequence belongs to the sigma-70 factor family. RpoD/SigA subfamily. In terms of assembly, interacts transiently with the RNA polymerase catalytic core.

It is found in the cytoplasm. Functionally, sigma factors are initiation factors that promote the attachment of RNA polymerase to specific initiation sites and are then released. This sigma factor is the primary sigma factor during exponential growth. The protein is RNA polymerase sigma factor SigA of Lactococcus lactis subsp. lactis (strain IL1403) (Streptococcus lactis).